The primary structure comprises 446 residues: Probable polyamine aminopropyl transferase (446 aa).

Residues 1-117 (MVEPAIGRNH…KRIACVVSAV (117 aa)) are unknown. The segment at 64 to 94 (GRGAERWHRSPRQANGRFSNQRYSSTSPNSS) is disordered. Positions 75 to 94 (RQANGRFSNQRYSSTSPNSS) are enriched in polar residues. The PABS domain maps to 116–351 (AVIFVATSCV…ELFAKKPGSG (236 aa)). A spermidine synthase region spans residues 118–353 (IFVATSCVSP…FAKKPGSGSE (236 aa)). S-methyl-5'-thioadenosine-binding positions include Asn147, Glu226, and 251-252 (DG). The Proton acceptor role is filled by Asp269.

The protein belongs to the spermidine/spermine synthase family. In terms of assembly, homodimer or homotetramer.

It localises to the cytoplasm. It catalyses the reaction S-adenosyl 3-(methylsulfanyl)propylamine + putrescine = S-methyl-5'-thioadenosine + spermidine + H(+). The protein operates within amine and polyamine biosynthesis; spermidine biosynthesis; spermidine from putrescine: step 1/1. Catalyzes the irreversible transfer of a propylamine group from the amino donor S-adenosylmethioninamine (decarboxy-AdoMet) to putrescine (1,4-diaminobutane) to yield spermidine. The chain is Probable polyamine aminopropyl transferase (speE) from Bifidobacterium longum (strain NCC 2705).